Here is a 470-residue protein sequence, read N- to C-terminus: Probable citrate synthase, mitochondrial (470 aa).

Catalysis depends on residues His297, His351, and Asp406.

The protein belongs to the citrate synthase family. As to quaternary structure, homodimer.

It is found in the mitochondrion matrix. It carries out the reaction oxaloacetate + acetyl-CoA + H2O = citrate + CoA + H(+). The protein operates within carbohydrate metabolism; tricarboxylic acid cycle; isocitrate from oxaloacetate: step 1/2. The protein is Probable citrate synthase, mitochondrial of Leishmania braziliensis.